The chain runs to 65 residues: Small ribosomal subunit protein bS21 (65 aa).

A disordered region spans residues Gly-45–Ser-65. The segment covering Lys-48 to Gln-57 has biased composition (basic residues).

Belongs to the bacterial ribosomal protein bS21 family.

This Chlorobium luteolum (strain DSM 273 / BCRC 81028 / 2530) (Pelodictyon luteolum) protein is Small ribosomal subunit protein bS21.